The primary structure comprises 131 residues: Histone H2A.2 (131 aa).

The tract at residues 1-22 (MSGGKGKAGSSEKASTSRSAKA) is disordered. S2 is modified (N-acetylserine). An N6-acetyllysine mark is found at K5 and K7. Residue Q105 is modified to N5-methylglutamine. S128 bears the Phosphoserine mark. Positions 128–129 (SQ) match the [ST]-Q motif motif.

This sequence belongs to the histone H2A family. As to quaternary structure, the nucleosome is a histone octamer containing two molecules each of H2A, H2B, H3 and H4 assembled in one H3-H4 heterotetramer and two H2A-H2B heterodimers. The octamer wraps approximately 147 bp of DNA. Phosphorylated to form H2AS128ph (gamma-H2A) in response to DNA double-strand breaks (DSBs) generated by exogenous genotoxic agents and by stalled replication forks. Phosphorylation is dependent on the DNA damage checkpoint kinases MEC1/ATR and TEL1/ATM, spreads on either side of a detected DSB site and may mark the surrounding chromatin for recruitment of proteins required for DNA damage signaling and repair. Gamma-H2A is removed from the DNA prior to the strand invasion-primer extension step of the repair process and subsequently dephosphorylated. Dephosphorylation is necessary for efficient recovery from the DNA damage checkpoint. Post-translationally, acetylated by ESA1 to form H2AK4ac and H2AK7ac.

The protein localises to the nucleus. It localises to the chromosome. Its function is as follows. Core component of nucleosome which plays a central role in DNA double strand break (DSB) repair. Nucleosomes wrap and compact DNA into chromatin, limiting DNA accessibility to the cellular machineries which require DNA as a template. Histones thereby play a central role in transcription regulation, DNA repair, DNA replication and chromosomal stability. DNA accessibility is regulated via a complex set of post-translational modifications of histones, also called histone code, and nucleosome remodeling. The sequence is that of Histone H2A.2 (HTA2) from Candida albicans (strain SC5314 / ATCC MYA-2876) (Yeast).